The following is a 792-amino-acid chain: Vicilin Car i 2.0101 (792 aa).

An N-terminal signal peptide occupies residues 1 to 26 (MVTKAKIPLFLFLSALFLALVCSSLA). Disordered regions lie at residues 132-153 (ERRE…DPRE), 182-217 (RFEE…YRQC), 240-272 (ERLE…EQRY), 302-325 (EERE…CQRR), and 350-394 (QQGR…ESGE). Composition is skewed to basic and acidic residues over residues 182–200 (RFEE…RGRD) and 207–217 (PRDPREQYRQC). Residues 302-314 (EERERQRGRDRQD) show a composition bias toward basic and acidic residues. The span at 315-325 (PQQQYHRCQRR) shows a compositional bias: low complexity. Residues 350-375 (QQGREWGPDQASPRRESRGREEEQQR) are compositionally biased toward basic and acidic residues. Y379 is a Cu cation binding site. 2 consecutive Cupin type-1 domains span residues 384-537 (QGLR…DRLE) and 582-754 (ISLK…EEIE). Residues C652, H654, and H698 each coordinate Cu cation. Residues 727–754 (LAGQNNIINQLEREAKELSFNMPREEIE) are a coiled coil.

This sequence belongs to the 7S seed storage protein family. As to quaternary structure, homotrimer. In terms of tissue distribution, expressed in seed (at protein level). Expressed in seed.

In terms of biological role, seed storage protein. The chain is Vicilin Car i 2.0101 from Carya illinoinensis (Pecan).